A 497-amino-acid polypeptide reads, in one-letter code: tRNA-2-methylthio-N(6)-dimethylallyladenosine synthase (497 aa).

A disordered region spans residues 1 to 50 (MTGTSNIPTHGKEHKDAPALLPLPAPNPHHTHAAHPGNPSHDRPPSRGKL). Residues 48 to 165 (GKLFIKTHGC…LPDMIRARRE (118 aa)) form the MTTase N-terminal domain. [4Fe-4S] cluster contacts are provided by Cys-57, Cys-94, Cys-128, Cys-202, Cys-206, and Cys-209. The 243-residue stretch at 188–430 (RAEGPSAFVS…QKHINTYAAD (243 aa)) folds into the Radical SAM core domain. The region spanning 433–496 (KRMIGTVQTV…SNSLRGRVHT (64 aa)) is the TRAM domain.

It belongs to the methylthiotransferase family. MiaB subfamily. As to quaternary structure, monomer. [4Fe-4S] cluster serves as cofactor.

It is found in the cytoplasm. It carries out the reaction N(6)-dimethylallyladenosine(37) in tRNA + (sulfur carrier)-SH + AH2 + 2 S-adenosyl-L-methionine = 2-methylsulfanyl-N(6)-dimethylallyladenosine(37) in tRNA + (sulfur carrier)-H + 5'-deoxyadenosine + L-methionine + A + S-adenosyl-L-homocysteine + 2 H(+). Its function is as follows. Catalyzes the methylthiolation of N6-(dimethylallyl)adenosine (i(6)A), leading to the formation of 2-methylthio-N6-(dimethylallyl)adenosine (ms(2)i(6)A) at position 37 in tRNAs that read codons beginning with uridine. This chain is tRNA-2-methylthio-N(6)-dimethylallyladenosine synthase, found in Xylella fastidiosa (strain 9a5c).